The following is a 596-amino-acid chain: Nucleotidyltransferase lcsQ (596 aa).

A mitochondrion-targeting transit peptide spans 1-22 (MLLRLSPSRMALKRKLDSFLRN). Residues 475–504 (IVAHPGKPSQPADVPETPLSSGASKSKNLD) are disordered.

It belongs to the tRNA nucleotidyltransferase/poly(A) polymerase family.

It is found in the mitochondrion. In terms of biological role, nucleotidyltransferase; part of the gene cluster that mediates the biosynthesis of the lipopeptide antibiotics leucinostatins that show extensive biological activities, including antimalarial, antiviral, antibacterial, antifungal, and antitumor activities, as well as phytotoxic. The function of lcsQ within the leucinostatins biosynthesis has not been identified yet. This chain is Nucleotidyltransferase lcsQ, found in Purpureocillium lilacinum (Paecilomyces lilacinus).